Here is a 760-residue protein sequence, read N- to C-terminus: Anti-sigma-I factor RsgI6 (760 aa).

The Cytoplasmic segment spans residues 1 to 55 (MIVGKVLDMDEKTAIIMTDDFAFLNVVRTSEMAVGKKVKVLDSDIIKPKNSLRRY). Residues 2–49 (IVGKVLDMDEKTAIIMTDDFAFLNVVRTSEMAVGKKVKVLDSDIIKPK) form the RsgI N-terminal anti-sigma domain. A helical membrane pass occupies residues 56–76 (LPVAAVAACFVIVLSFVLMFI). Over 77–760 (NGNTARKNIY…GTLQTTYRIP (684 aa)) the chain is Extracellular. A disordered region spans residues 274 to 352 (AINTGPAESA…STPKPVSPVQ (79 aa)). Over residues 291-352 (LPATSTPGRT…STPKPVSPVQ (62 aa)) the composition is skewed to polar residues. A GH10 domain is found at 402 to 701 (DSSNKPIENA…NEAGRRFESL (300 aa)). Glu538 acts as the Proton donor in catalysis. Glu635 (nucleophile) is an active-site residue.

It in the C-terminal section; belongs to the glycosyl hydrolase 10 (cellulase F) family. Interacts (via RsgI N-terminal anti-sigma domain) with SigI6.

The protein resides in the cell membrane. It catalyses the reaction Endohydrolysis of (1-&gt;4)-beta-D-xylosidic linkages in xylans.. The protein operates within glycan degradation; xylan degradation. In terms of biological role, anti-sigma factor for SigI6. Negatively regulates SigI6 activity through direct interaction. Binding of the polysaccharide substrate to the extracellular C-terminal sensing domain of RsgI6 may induce a conformational change in its N-terminal cytoplasmic region, leading to the release and activation of SigI6. Binds to and hydrolyzes insoluble and soluble xylan substrates. Has low enzymatic activity. The protein is Anti-sigma-I factor RsgI6 of Acetivibrio thermocellus (strain ATCC 27405 / DSM 1237 / JCM 9322 / NBRC 103400 / NCIMB 10682 / NRRL B-4536 / VPI 7372) (Clostridium thermocellum).